The sequence spans 684 residues: Probable pectin methyltransferase QUA2 (684 aa).

The segment at 1–35 (MSMPLQRGISGVRVSDSSDDLRDSQMKDKTERARS) is disordered. At 1–86 (MSMPLQRGIS…RHRLMLLFLK (86 aa)) the chain is on the cytoplasmic side. The segment covering 19–35 (DDLRDSQMKDKTERARS) has biased composition (basic and acidic residues). A helical; Signal-anchor for type II membrane protein membrane pass occupies residues 87–107 (ISLVLIVVIALAGSFWWTISI). Topologically, residues 108–684 (STSSRGHVYH…QKPFTKRQSI (577 aa)) are lumenal. Asn-161 and Asn-476 each carry an N-linked (GlcNAc...) asparagine glycan.

This sequence belongs to the methyltransferase superfamily. In terms of tissue distribution, ubiquitous.

It localises to the golgi apparatus membrane. It functions in the pathway glycan metabolism; pectin biosynthesis. Its function is as follows. May be involved in the synthesis of homogalacturonan. Required for normal cell adhesion and plant development. This chain is Probable pectin methyltransferase QUA2 (QUA2), found in Arabidopsis thaliana (Mouse-ear cress).